Here is a 187-residue protein sequence, read N- to C-terminus: tRNA (mnm(5)s(2)U34)-methyltransferase (187 aa).

S-adenosyl-L-methionine contacts are provided by Asn31, Asn33, Asp51, Gln53, His77, and Glu78.

It belongs to the methyltransferase superfamily. MnmM family. In terms of assembly, homodimer.

It catalyses the reaction 5-aminomethyl-2-thiouridine(34) in tRNA + S-adenosyl-L-methionine = 5-methylaminomethyl-2-thiouridine(34) in tRNA + S-adenosyl-L-homocysteine + H(+). It participates in tRNA modification. Its function is as follows. Involved in the biosynthesis of 5-methylaminomethyl-2-thiouridine (mnm(5)s(2)U) at the wobble position (U34) in tRNA. Catalyzes the transfer of a methyl group from S-adenosyl-L-methionine to nm(5)s(2)U34 to form mnm(5)s(2)U34. This chain is tRNA (mnm(5)s(2)U34)-methyltransferase, found in Staphylococcus aureus (strain NCTC 8325 / PS 47).